We begin with the raw amino-acid sequence, 204 residues long: Ribosomal RNA small subunit methyltransferase G (204 aa).

Residues glycine 76, leucine 81, 127–128, and arginine 140 each bind S-adenosyl-L-methionine; that span reads IE.

This sequence belongs to the methyltransferase superfamily. RNA methyltransferase RsmG family.

The protein localises to the cytoplasm. The enzyme catalyses guanosine(527) in 16S rRNA + S-adenosyl-L-methionine = N(7)-methylguanosine(527) in 16S rRNA + S-adenosyl-L-homocysteine. Its function is as follows. Specifically methylates the N7 position of guanine in position 527 of 16S rRNA. The protein is Ribosomal RNA small subunit methyltransferase G of Francisella philomiragia subsp. philomiragia (strain ATCC 25017 / CCUG 19701 / FSC 153 / O#319-036).